Consider the following 369-residue polypeptide: Developmentally-regulated G-protein 3 (369 aa).

The 226-residue stretch at 66–291 (SRVGLVGFPS…LLDKIWEYLD (226 aa)) folds into the OBG-type G domain. GTP-binding positions include 72–79 (GFPSVGKS), 118–122 (DLPGI), and 249–252 (NKID). The TGS domain maps to 291–367 (DLTRIYTKPK…EDEDVVQIVK (77 aa)).

Belongs to the TRAFAC class OBG-HflX-like GTPase superfamily. OBG GTPase family.

Binds GDP and GTP, and has low GTPase activity in vitro. This is Developmentally-regulated G-protein 3 (DRG3) from Arabidopsis thaliana (Mouse-ear cress).